A 397-amino-acid polypeptide reads, in one-letter code: MYNYPDERGYFGPFGGKFVPETLMYALEELEEKYRELKSDPEFQKELDYYLREYAGRPTPLYFAEKLTKYVGGAKIYLKREDLLHTGAHKINNTIGQCLLTKRMGKKRVIAETGAGQHGVATATASALFGLECVVYMGEEDAERQALNVFRMKLLGAKVEIVKSGSRTLKDAINEALRDWVTNVESTHYVIGSVVGPHPFPMIVRDFQSVIGRETKEQILQKEGRLPDAIVACVGGGSNAMGIFYPFVEDKGVQLIGVEAGGYGLETGQHAASICGGSVGILHGMKSYFLQDEEGQIQPTHSISAGLDYPGVGPEHALFHEIKRAKYTTATDEEALEGFKLLARTEGIIPALESAHAVIKAVEVARELGKDGIVVINLSGRGDKDMAHVMKHLSLEG.

Lysine 90 carries the post-translational modification N6-(pyridoxal phosphate)lysine.

It belongs to the TrpB family. As to quaternary structure, tetramer of two alpha and two beta chains. Pyridoxal 5'-phosphate serves as cofactor.

The catalysed reaction is (1S,2R)-1-C-(indol-3-yl)glycerol 3-phosphate + L-serine = D-glyceraldehyde 3-phosphate + L-tryptophan + H2O. Its pathway is amino-acid biosynthesis; L-tryptophan biosynthesis; L-tryptophan from chorismate: step 5/5. The beta subunit is responsible for the synthesis of L-tryptophan from indole and L-serine. The chain is Tryptophan synthase beta chain 1 (trpB1) from Aquifex aeolicus (strain VF5).